Reading from the N-terminus, the 84-residue chain is U21-theraphotoxin-Cg1a 1 (84 aa).

The first 21 residues, 1–21 (MKVSVLITLAVLGVMFLLTSA), serve as a signal peptide directing secretion. A propeptide spanning residues 22–47 (EERGSDQMDSPAWLKSMEIIFQSEER) is cleaved from the precursor. Disulfide bonds link C49–C63, C56–C68, and C62–C76. Residue V82 is modified to Valine amide.

The protein belongs to the neurotoxin 10 (Hwtx-1) family. 05 (F4a) subfamily. Expressed by the venom gland.

It localises to the secreted. In terms of biological role, probable ion channel inhibitor. This Chilobrachys guangxiensis (Chinese earth tiger tarantula) protein is U21-theraphotoxin-Cg1a 1.